We begin with the raw amino-acid sequence, 294 residues long: 33 kDa chaperonin (294 aa).

Intrachain disulfides connect C238–C240 and C271–C274.

Belongs to the HSP33 family. In terms of processing, under oxidizing conditions two disulfide bonds are formed involving the reactive cysteines. Under reducing conditions zinc is bound to the reactive cysteines and the protein is inactive.

The protein resides in the cytoplasm. Functionally, redox regulated molecular chaperone. Protects both thermally unfolding and oxidatively damaged proteins from irreversible aggregation. Plays an important role in the bacterial defense system toward oxidative stress. The sequence is that of 33 kDa chaperonin from Thermoanaerobacter pseudethanolicus (strain ATCC 33223 / 39E) (Clostridium thermohydrosulfuricum).